Here is an 86-residue protein sequence, read N- to C-terminus: MTRFVLFISCFFLIGMVVECKEGYLLGSRGCKMNCLTRPEKFCELECSLVGGENGYCAYWLACYCYNVPESVKLWESDTNECGKRK.

The signal sequence occupies residues 1–20 (MTRFVLFISCFFLIGMVVEC). An LCN-type CS-alpha/beta domain is found at 21 to 83 (KEGYLLGSRG…LWESDTNECG (63 aa)). Cystine bridges form between C31–C82, C35–C57, C43–C63, and C47–C65. C82 bears the Cysteine amide mark.

Belongs to the long (4 C-C) scorpion toxin superfamily. Sodium channel inhibitor family. Beta subfamily. As to expression, expressed by the venom gland.

It is found in the secreted. Functionally, beta toxins bind voltage-independently at site-4 of sodium channels (Nav) and shift the voltage of activation toward more negative potentials thereby affecting sodium channel activation and promoting spontaneous and repetitive firing. This is Toxin To8 from Tityus obscurus (Amazonian scorpion).